Here is a 166-residue protein sequence, read N- to C-terminus: NAD(P)H-quinone oxidoreductase subunit I, chloroplastic (166 aa).

4Fe-4S ferredoxin-type domains are found at residues 55 to 84 (GRIH…VDWK) and 95 to 124 (LNYS…MTEE). [4Fe-4S] cluster-binding residues include C64, C67, C70, C74, C104, C107, C110, and C114.

This sequence belongs to the complex I 23 kDa subunit family. In terms of assembly, NDH is composed of at least 16 different subunits, 5 of which are encoded in the nucleus. Requires [4Fe-4S] cluster as cofactor.

It localises to the plastid. The protein localises to the chloroplast thylakoid membrane. The enzyme catalyses a plastoquinone + NADH + (n+1) H(+)(in) = a plastoquinol + NAD(+) + n H(+)(out). It carries out the reaction a plastoquinone + NADPH + (n+1) H(+)(in) = a plastoquinol + NADP(+) + n H(+)(out). Functionally, NDH shuttles electrons from NAD(P)H:plastoquinone, via FMN and iron-sulfur (Fe-S) centers, to quinones in the photosynthetic chain and possibly in a chloroplast respiratory chain. The immediate electron acceptor for the enzyme in this species is believed to be plastoquinone. Couples the redox reaction to proton translocation, and thus conserves the redox energy in a proton gradient. The sequence is that of NAD(P)H-quinone oxidoreductase subunit I, chloroplastic from Chaetymenia peduncularis (Daisy).